A 181-amino-acid chain; its full sequence is uncharacterized protein (181 aa).

The protein to M.jannaschii MJ1106.

This is an uncharacterized protein from Methanothermobacter thermautotrophicus (strain ATCC 29096 / DSM 1053 / JCM 10044 / NBRC 100330 / Delta H) (Methanobacterium thermoautotrophicum).